We begin with the raw amino-acid sequence, 516 residues long: Importin subunit alpha-B (516 aa).

The segment covering 1–29 has biased composition (basic and acidic residues); the sequence is MQRSKQETRKSQYKKSIDSDESRRKREEA. The segment at 1–54 is disordered; it reads MQRSKQETRKSQYKKSIDSDESRRKREEASLSIRKNKREESLLKKRTQAVPGST. Residues 1 to 55 enclose the IBB domain; sequence MQRSKQETRKSQYKKSIDSDESRRKREEASLSIRKNKREESLLKKRTQAVPGSTP. ARM repeat units lie at residues 55-96, 100-140, 143-182, 185-227, 229-268, 271-310, 313-352, 355-394, and 398-437; these read PVKV…KLLS, SPPI…NIAS, PEQTRVVIENGAIQVFVLLLSSPHDDVREQAVWALGNIAG, HYCR…NFCR, KPQPPFEIVRASLPVLAKLIYYQDEEVLIDACWALSYLSD, NERIQEVIDAKVCRKMVELLGHPTIAVQTPALRTIGNIVT, DNQTQIVLSVQALSHLLNLLQSPKRAIRKEACWTISNITA, KNQIQQVIDANIIPSLVYLLANAEFEIQKEAAWAISNATS, and PQQIHFLVSQGCVKPLCDLLKVSDPRIINVALEGIENILV. A disordered region spans residues 490 to 516; it reads EQEDEGDLMPEGSSFSFSNQTNSNFNL. Over residues 502–516 the composition is skewed to low complexity; sequence SSFSFSNQTNSNFNL.

The protein belongs to the importin alpha family. In terms of assembly, forms a complex with tnpo/importin subunit beta.

The protein resides in the cytoplasm. Its subcellular location is the nucleus envelope. Its function is as follows. Functions in nuclear protein import via a substrate-importin alpha-beta transport complex that passes though the nuclear pore complexes (NPC). Binds specifically and directly to substrates containing either a simple or bipartite NLS motif. The sequence is that of Importin subunit alpha-B from Dictyostelium discoideum (Social amoeba).